The chain runs to 241 residues: MKVLALSALLSLASAASISRRSDFCGQWDTATAGDFILYNDLWGEDNASSGSQCTGVDSASGSEIAWHTSWSWEGGSSDVKSYANAALQFTGTQLSSISSIPSTWKWTYSGSDIVADVAYDMFLGSTADASSDEYEIMVWLAALGGAGPISSTGSTIATPTINGVTWDLYTGPNGDTTVYSFVAQSTTEDFSGDLNDFFTYLVDNEGVSDSLYLTTLEAGTEPFTGSDAELKVSEYSVSIE.

A signal peptide spans 1 to 16 (MKVLALSALLSLASAA). Residue N47 is glycosylated (N-linked (GlcNAc...) asparagine).

It belongs to the glycosyl hydrolase 12 (cellulase H) family.

It is found in the secreted. The catalysed reaction is xyloglucan + H2O = xyloglucan oligosaccharides.. In terms of biological role, catalyzes endohydrolysis of 1,4-beta-D-glucosidic linkages in xyloglucan with retention of the beta-configuration of the glycosyl residues. Specific for xyloglucan and does not hydrolyze other cell wall components. The chain is Xyloglucan-specific endo-beta-1,4-glucanase A (xgeA) from Aspergillus niger.